Here is a 294-residue protein sequence, read N- to C-terminus: Phosphatidylinositol transfer protein SFH5 (294 aa).

The region spanning 100 to 266 is the CRAL-TRIO domain; that stretch reads HNTELQNVGI…GYGGKDKKNN (167 aa). Residues Tyr-128, Arg-148, His-173, Tyr-175, and Lys-209 each coordinate heme.

The protein belongs to the SFH5 family. Heme b is required as a cofactor.

The protein localises to the cytoplasm. The protein resides in the endoplasmic reticulum membrane. It is found in the microsome membrane. It carries out the reaction a 1,2-diacyl-sn-glycero-3-phospho-(1D-myo-inositol)(in) = a 1,2-diacyl-sn-glycero-3-phospho-(1D-myo-inositol)(out). Non-classical phosphatidylinositol (PtdIns) transfer protein (PITP), which exhibits PtdIns-binding/transfer activity in the absence of detectable PtdCho-binding/transfer activity. Regulates PtdIns(4,5)P2 homeostasis at the plasma membrane. Heme-binding protein that may play a role in organic oxidant-induced stress responses. The sequence is that of Phosphatidylinositol transfer protein SFH5 (SFH5) from Saccharomyces cerevisiae (strain YJM789) (Baker's yeast).